We begin with the raw amino-acid sequence, 431 residues long: Adenylosuccinate synthetase (431 aa).

GTP-binding positions include 12 to 18 (GDEGKGK) and 40 to 42 (GHT). Catalysis depends on aspartate 13, which acts as the Proton acceptor. Positions 13 and 40 each coordinate Mg(2+). Residues 13 to 16 (DEGK), 38 to 41 (NAGH), threonine 129, arginine 143, glutamine 224, and threonine 239 contribute to the IMP site. Catalysis depends on histidine 41, which acts as the Proton donor. Lysine 292 participates in a covalent cross-link: Isoglutamyl lysine isopeptide (Lys-Gln) (interchain with Q-Cter in protein Pup). 299-305 (VTTGRAR) contributes to the substrate binding site. Arginine 303 lines the IMP pocket. Residues arginine 305, 331–333 (KLD), and 413–415 (GVG) each bind GTP.

It belongs to the adenylosuccinate synthetase family. As to quaternary structure, homodimer. Mg(2+) serves as cofactor.

It is found in the cytoplasm. It carries out the reaction IMP + L-aspartate + GTP = N(6)-(1,2-dicarboxyethyl)-AMP + GDP + phosphate + 2 H(+). Its pathway is purine metabolism; AMP biosynthesis via de novo pathway; AMP from IMP: step 1/2. Functionally, plays an important role in the de novo pathway of purine nucleotide biosynthesis. Catalyzes the first committed step in the biosynthesis of AMP from IMP. The polypeptide is Adenylosuccinate synthetase (Mycolicibacterium smegmatis (strain ATCC 700084 / mc(2)155) (Mycobacterium smegmatis)).